Reading from the N-terminus, the 279-residue chain is Thymidylate synthase (279 aa).

R141–R142 contributes to the dUMP binding site. The Nucleophile role is filled by C161. Residues R181–D184, N192, and H222–Y224 contribute to the dUMP site. A (6R)-5,10-methylene-5,6,7,8-tetrahydrofolate-binding site is contributed by D184. A278 is a (6R)-5,10-methylene-5,6,7,8-tetrahydrofolate binding site.

The protein belongs to the thymidylate synthase family. Bacterial-type ThyA subfamily. In terms of assembly, homodimer.

Its subcellular location is the cytoplasm. The catalysed reaction is dUMP + (6R)-5,10-methylene-5,6,7,8-tetrahydrofolate = 7,8-dihydrofolate + dTMP. It functions in the pathway pyrimidine metabolism; dTTP biosynthesis. In terms of biological role, catalyzes the reductive methylation of 2'-deoxyuridine-5'-monophosphate (dUMP) to 2'-deoxythymidine-5'-monophosphate (dTMP) while utilizing 5,10-methylenetetrahydrofolate (mTHF) as the methyl donor and reductant in the reaction, yielding dihydrofolate (DHF) as a by-product. This enzymatic reaction provides an intracellular de novo source of dTMP, an essential precursor for DNA biosynthesis. The sequence is that of Thymidylate synthase from Bacillus subtilis subsp. natto.